A 367-amino-acid chain; its full sequence is D-alanine--D-alanine ligase (367 aa).

In terms of domain architecture, ATP-grasp spans 145–351 (KRLLRDAGLP…QPALMDALIA (207 aa)). An ATP-binding site is contributed by 174 to 229 (HAVGCSELFIKPANLGSSVGISKARTPQEFAAACDLALRFDGKILIERCISPVREI). Asp306, Glu318, and Asn320 together coordinate Mg(2+).

It belongs to the D-alanine--D-alanine ligase family. Mg(2+) is required as a cofactor. It depends on Mn(2+) as a cofactor.

It is found in the cytoplasm. The catalysed reaction is 2 D-alanine + ATP = D-alanyl-D-alanine + ADP + phosphate + H(+). Its pathway is cell wall biogenesis; peptidoglycan biosynthesis. Its function is as follows. Cell wall formation. The chain is D-alanine--D-alanine ligase from Bradyrhizobium sp. (strain BTAi1 / ATCC BAA-1182).